The primary structure comprises 196 residues: Corrinoid adenosyltransferase CobA (196 aa).

Residue 36 to 42 (GNGKGKT) participates in ATP binding.

The protein belongs to the Cob(I)alamin adenosyltransferase family. Homodimer.

The protein resides in the cytoplasm. It catalyses the reaction 2 cob(II)yrinate a,c diamide + reduced [electron-transfer flavoprotein] + 2 ATP = 2 adenosylcob(III)yrinate a,c-diamide + 2 triphosphate + oxidized [electron-transfer flavoprotein] + 3 H(+). It carries out the reaction 2 cob(II)alamin + reduced [electron-transfer flavoprotein] + 2 ATP = 2 adenosylcob(III)alamin + 2 triphosphate + oxidized [electron-transfer flavoprotein] + 3 H(+). Its pathway is cofactor biosynthesis; adenosylcobalamin biosynthesis; adenosylcobalamin from cob(II)yrinate a,c-diamide: step 2/7. Required for both de novo synthesis of the corrin ring for the assimilation of exogenous corrinoids. Participates in the adenosylation of a variety of incomplete and complete corrinoids. This is Corrinoid adenosyltransferase CobA (btuR) from Salmonella typhimurium (strain LT2 / SGSC1412 / ATCC 700720).